Consider the following 342-residue polypeptide: Platelet-activating factor receptor (342 aa).

Residues 1–16 are Extracellular-facing; sequence MEPNNSFRVDSEFRYT. N4 carries an N-linked (GlcNAc...) asparagine glycan. A helical transmembrane segment spans residues 17 to 38; that stretch reads LFPIFYSIVFVLGVIANSYVLW. Residues 39–54 are Cytoplasmic-facing; sequence VFARLYPSKKFNEIKI. A helical membrane pass occupies residues 55-74; it reads FMVNLTMADLLFLVTLPLWI. Residues 75-91 are Extracellular-facing; the sequence is VYYYNQGDWILPKFLCN. C90 and C173 are disulfide-bonded. Residues 92 to 113 traverse the membrane as a helical segment; sequence LAGCFFFINTYCSVAFLAVITY. Topologically, residues 114 to 133 are cytoplasmic; the sequence is NRFQAVTRPIKTAQATTRKR. The helical transmembrane segment at 134–155 threads the bilayer; the sequence is GFLLSLIIWVSIVGAASYFFVL. Over 156-184 the chain is Extracellular; it reads DSTNSEPKKTGSGNITRCFEHYEKGSIPV. N169 carries an N-linked (GlcNAc...) asparagine glycan. The chain crosses the membrane as a helical span at residues 185–205; that stretch reads LIIHIFLVFSFFLVFLIILFC. The Cytoplasmic portion of the chain corresponds to 206–233; the sequence is NLVIIRTLLTQQVQMQRNAEVKRRALWM. A helical membrane pass occupies residues 234–254; sequence VCTVLAVFVICFVPHHLVQLP. The Extracellular segment spans residues 255–276; sequence WTLAELGFQDTDFHQGINDAHQ. The chain crosses the membrane as a helical span at residues 277-296; the sequence is VTLCLLSTNCVLDPIIYCFL. The Cytoplasmic segment spans residues 297–342; sequence TKKFRKHLTEKLYSMRESRKCSRATSETGTEVVVQLKDAPIKSLKY.

The protein belongs to the G-protein coupled receptor 1 family. As to quaternary structure, interacts with ARRB1.

Its subcellular location is the cell membrane. In terms of biological role, receptor for platelet activating factor, a chemotactic phospholipid mediator that possesses potent inflammatory, smooth-muscle contractile and hypotensive activity. Seems to mediate its action via a G protein that activates a phosphatidylinositol-calcium second messenger system. This is Platelet-activating factor receptor from Capra hircus (Goat).